The primary structure comprises 157 residues: Ribonuclease H (157 aa).

In terms of domain architecture, RNase H type-1 spans 1–146 (MPDLVAYTDG…ADELARAGMA (146 aa)). Mg(2+)-binding residues include Asp9, Glu52, Asp74, and Asp138.

The protein belongs to the RNase H family. In terms of assembly, monomer. Mg(2+) is required as a cofactor.

It is found in the cytoplasm. It carries out the reaction Endonucleolytic cleavage to 5'-phosphomonoester.. Its function is as follows. Endonuclease that specifically degrades the RNA of RNA-DNA hybrids. In Jannaschia sp. (strain CCS1), this protein is Ribonuclease H.